The sequence spans 111 residues: Protein BEX3 (111 aa).

The interval 1–63 (MANIHQENEE…RQINDGMGGD (63 aa)) is disordered. Residues 68-93 (EIFMEEMREIRRKLRELQLRNCLRIL) form an interaction with p75NTR/NGFR region. An interaction with 14-3-3 epsilon region spans residues 68–111 (EIFMEEMREIRRKLRELQLRNCLRILMGELSNHHDHHDEFCLMP). The Nuclear export signal motif lies at 77-87 (IRRKLRELQLR). Residues 100 to 104 (HHDHH) form a his cluster region. Cysteine 108 provides a ligand contact to Zn(2+).

The protein belongs to the BEX family. Self-associates. Binds to the DEATH domain of p75NTR/NGFR. Interacts with 14-3-3 epsilon (YWHAE). Interacts with DIABLO/SMAC. In terms of processing, ubiquitinated. Degraded by the proteasome. Found in ovarian granulosa cells, testis, prostate and seminal vesicle tissue. High levels also detected in liver.

Its subcellular location is the nucleus. It is found in the cytoplasm. The protein resides in the cytosol. Its function is as follows. May be a signaling adapter molecule involved in NGFR/p75NTR-mediated apoptosis induced by NGF. Plays a role in zinc-triggered neuronal death. In absence of reductive stress, acts as a pseudosubstrate for the CRL2(FEM1B) complex: associates with FEM1B via zinc, thereby preventing association between FEM1B and its substrates. The polypeptide is Protein BEX3 (Homo sapiens (Human)).